A 446-amino-acid chain; its full sequence is Chromogranin-A (446 aa).

Positions 1–16 (SAAALALLLCAGQVIA) are cleaved as a signal peptide. The cysteines at positions 33 and 54 are disulfide-linked. The interval 85–426 (AKERSHQQKK…RPEDQELESL (342 aa)) is disordered. Ser97 carries the post-translational modification Phosphoserine. Residues 105 to 138 (VLEKQNDQAELKEGTEEASSKEAAEKRGDSKEVE) show a composition bias toward basic and acidic residues. Over residues 160–171 (EAEDQTPGEEEA) the composition is skewed to acidic residues. Ser209 bears the Phosphoserine mark. Residues 226 to 243 (AGEKAVPEEEGPRSEAFD) show a composition bias toward basic and acidic residues. Ser286 is subject to Phosphoserine. At Gly304 the chain carries Glycine amide. At Ser319 the chain carries Phosphoserine. Over residues 319–346 (SEEWENAKRWSKMDRLAKELTAEKRLQG) the composition is skewed to basic and acidic residues. Residues 347 to 357 (EEEEEEEEEDP) show a composition bias toward acidic residues. Ser360 is modified (phosphoserine). The residue at position 361 (Met361) is a Methionine sulfoxide. Phosphoserine occurs at positions 387, 391, 413, and 427. Residues 403–420 (YLEEKKEEEGSANRRPED) are compositionally biased toward basic and acidic residues. O-linked (Xyl...) (chondroitin sulfate) serine glycosylation is present at Ser413.

This sequence belongs to the chromogranin/secretogranin protein family. Self-interacts; self-assembly is promoted in vitro by chondroitin sulfate attachment which occurs at mildly acidic pH conditions. Interacts with SCG3. Interacts with ITPR1 in the secretory granules. Post-translationally, O-glycosylated; contains chondroitin sulfate (CS). CS attachment is pH-dependent, being observed at mildly acidic conditions of pH 5 but not at neutral pH, and promotes self-assembly in vitro. In terms of processing, parathyroid CHGA is sulfated on tyrosine residues, whereas adrenal CHGA seems to be mainly sulfated on oligosaccharide residues.

It localises to the secreted. Its subcellular location is the cytoplasmic vesicle. The protein localises to the secretory vesicle. It is found in the neuronal dense core vesicle. In terms of biological role, strongly inhibits glucose induced insulin release from the pancreas. Its function is as follows. Inhibits low calcium-stimulated parathyroid cell secretion. Functionally, inhibits catecholamine release from chromaffin cells and noradrenergic neurons by acting as a non-competitive nicotinic cholinergic antagonist. Can induce mast cell migration, degranulation and production of cytokines and chemokines. Regulates granule biogenesis in endocrine cells by up-regulating the transcription of protease nexin 1 (SERPINE2) via a cAMP-PKA-SP1 pathway. This leads to inhibition of granule protein degradation in the Golgi complex which in turn promotes granule formation. The polypeptide is Chromogranin-A (CHGA) (Sus scrofa (Pig)).